Reading from the N-terminus, the 330-residue chain is D-lactate dehydrogenase (330 aa).

Residues 156-157 (RI), Asp176, 206-207 (VP), 233-235 (AAR), and Asp259 each bind NAD(+). Arg235 is an active-site residue. Glu264 is a catalytic residue. Catalysis depends on His296, which acts as the Proton donor.

It belongs to the D-isomer specific 2-hydroxyacid dehydrogenase family.

The enzyme catalyses (R)-lactate + NAD(+) = pyruvate + NADH + H(+). In Staphylococcus epidermidis (strain ATCC 35984 / DSM 28319 / BCRC 17069 / CCUG 31568 / BM 3577 / RP62A), this protein is D-lactate dehydrogenase (ldhD).